We begin with the raw amino-acid sequence, 152 residues long: Small ribosomal subunit protein uS8m (152 aa).

Belongs to the universal ribosomal protein uS8 family.

It localises to the mitochondrion. This is Small ribosomal subunit protein uS8m (mrps8) from Dictyostelium citrinum (Slime mold).